The chain runs to 476 residues: Exoglucanase-6A (476 aa).

Residues 1–16 (MAKFFLTAAFAAAALA) form the signal peptide. Intrachain disulfides connect Cys33–Cys50 and Cys44–Cys60. Positions 33 to 60 (CGGIGFNGPTCCQSGSTCVKQNDWYSQC) constitute a CBM1 domain. Positions 67-94 (TTTSTTSTSSSSTTSRATSTTRTGGVTS) are disordered. Residue Thr144 is glycosylated (O-linked (Man...) threonine). O-linked (Man...) serine glycosylation occurs at Ser153. The substrate site is built by Trp163 and Asp165. The N-linked (GlcNAc...) asparagine glycan is linked to Asn167. The interval 200 to 222 (YDLPDRDCAAAASNGEWAIANNG) is substrate binding loop 1. Asp252 serves as the catalytic Proton donor. Substrate-binding residues include His297, Trp300, Asn336, Trp397, Lys425, and Glu429. Residues 423–461 (WVKPGGECDGTSDTTAARYDYHCGLEDALKPAPEAGQWF) form a substrate binding loop 2 region. The Proton acceptor role is filled by Asp431.

This sequence belongs to the glycosyl hydrolase 6 (cellulase A) family. Monomer.

The catalysed reaction is Hydrolysis of (1-&gt;4)-beta-D-glucosidic linkages in cellulose and cellotetraose, releasing cellobiose from the non-reducing ends of the chains.. In terms of biological role, plays a central role in the recycling of plant biomass. The biological conversion of cellulose to glucose generally requires three types of hydrolytic enzymes: (1) Endoglucanases which cut internal beta-1,4-glucosidic bonds; (2) Exocellobiohydrolases that cut the disaccharide cellobiose from the non-reducing end of the cellulose polymer chain; (3) Beta-1,4-glucosidases which hydrolyze the cellobiose and other short cello-oligosaccharides to glucose. The protein is Exoglucanase-6A of Humicola insolens (Soft-rot fungus).